Consider the following 401-residue polypeptide: NAD(P)H-quinone oxidoreductase subunit H, chloroplastic (401 aa).

It belongs to the complex I 49 kDa subunit family. In terms of assembly, NDH is composed of at least 16 different subunits, 5 of which are encoded in the nucleus.

The protein resides in the plastid. It is found in the chloroplast thylakoid membrane. The catalysed reaction is a plastoquinone + NADH + (n+1) H(+)(in) = a plastoquinol + NAD(+) + n H(+)(out). The enzyme catalyses a plastoquinone + NADPH + (n+1) H(+)(in) = a plastoquinol + NADP(+) + n H(+)(out). Functionally, NDH shuttles electrons from NAD(P)H:plastoquinone, via FMN and iron-sulfur (Fe-S) centers, to quinones in the photosynthetic chain and possibly in a chloroplast respiratory chain. The immediate electron acceptor for the enzyme in this species is believed to be plastoquinone. Couples the redox reaction to proton translocation, and thus conserves the redox energy in a proton gradient. In Aethionema cordifolium (Lebanon stonecress), this protein is NAD(P)H-quinone oxidoreductase subunit H, chloroplastic.